The following is a 338-amino-acid chain: Mugineic-acid 3-dioxygenase (338 aa).

Residues 180-283 (DISGGRVVVD…RLSVASFIVP (104 aa)) form the Fe2OG dioxygenase domain. Residues His208, Asp210, and His264 each contribute to the Fe cation site. Arg274 contributes to the 2-oxoglutarate binding site.

It belongs to the iron/ascorbate-dependent oxidoreductase family. Fe(2+) serves as cofactor. L-ascorbate is required as a cofactor. In terms of tissue distribution, expressed in roots, but not in leaves.

It carries out the reaction mugineate + 2-oxoglutarate + O2 = 3-epihydroxymugineate + succinate + CO2 + H(+). It catalyses the reaction 2'-deoxymugineate + 2-oxoglutarate + O2 = 3-epihydroxy-2'-deoxymugineate + succinate + CO2 + H(+). In terms of biological role, involved in the biosynthesis of mugineic acid family of phytosiderophores. Hydroxylates the C-3 positions of mugineic acid (MA) and 2'-deoxymugineic acid (DMA). May be involved in boron tolerance. This Hordeum vulgare (Barley) protein is Mugineic-acid 3-dioxygenase (IDS2).